We begin with the raw amino-acid sequence, 164 residues long: Phosphopantetheine adenylyltransferase (164 aa).

Residue S9 coordinates substrate. ATP contacts are provided by residues S9–F10 and H17. 3 residues coordinate substrate: K41, L73, and K87. ATP is bound by residues G88–R90, E98, and Y122–S128.

This sequence belongs to the bacterial CoaD family. As to quaternary structure, homohexamer. Mg(2+) is required as a cofactor.

The protein localises to the cytoplasm. It carries out the reaction (R)-4'-phosphopantetheine + ATP + H(+) = 3'-dephospho-CoA + diphosphate. Its pathway is cofactor biosynthesis; coenzyme A biosynthesis; CoA from (R)-pantothenate: step 4/5. Reversibly transfers an adenylyl group from ATP to 4'-phosphopantetheine, yielding dephospho-CoA (dPCoA) and pyrophosphate. The protein is Phosphopantetheine adenylyltransferase of Rhodococcus opacus (strain B4).